Here is a 280-residue protein sequence, read N- to C-terminus: Thioesterase pynI (280 aa).

Acidic residues predominate over residues 136–145; the sequence is LADDSDDEDN. The interval 136–167 is disordered; sequence LADDSDDEDNRSDASDASDDGSTMSDEEEEDD.

The protein belongs to the AMT4 thioesterase family.

The protein operates within secondary metabolite biosynthesis. Functionally, thioesterase; part of the gene cluster that mediates the biosynthesis of pyranonigrins, a family of antioxidative compounds. The first step of pyranonigrins biosynthesis is performed by the hybrid PKS-NRPS synthetase that condenses 6 malonyl-CoA units to an acetyl starter unit, to form a 1,3,5-trioxotetradecane-6,8-dienyl-ACP. The enoyl reductase (ER) domain of pynA is likely to be functional during the first two rounds of polyketide chain extension, to generate the saturated C-C bonds of the alkyl side chain. PynA subsequently forms the amide bond between the acyl chain and L-serine. Although pynA has a terminal reductase domain, it appears to require the thioesterase pynI for the release of the straight-chain intermediate from pynA via the formation of a tetramic acid pyranonigrin J. The methyltransferase pynC then coverts pyranonigrin J to pyranonigrin I via N-methylation. The FAD-dependent monooxygenase pynG catalyzes an epoxidation-mediated cyclization to form the dihydro-gamma-pyrone moiety, followed by pynD-catalyzed oxidation of the alcohol to the ketone and enolization to yield the characteristic tetramic acid-fused gamma-pyrone core of pyranonigrin H. Pyranonigrin H is substrate of pynH for dehydration-mediated exo-methylene formation from the serine side chain to produce pyranonigrin E, before the oxidase pynE reduces the exo-methylene of pyranonigrin E into a pendant methyl to form pyranonigrin G. The FAD-linked oxidoreductase pynB performs the reverse reaction and converts pyranonigrin G back to pyranonigrin E. The sequence is that of Thioesterase pynI from Aspergillus niger (strain ATCC MYA-4892 / CBS 513.88 / FGSC A1513).